Reading from the N-terminus, the 163-residue chain is Cytochrome b6-f complex subunit 4 (163 aa).

The next 3 helical transmembrane spans lie at 36 to 56, 95 to 115, and 131 to 151; these read LLYI…GLAV, LLGV…PFLE, and TVFL…TLPI.

The protein belongs to the cytochrome b family. PetD subfamily. As to quaternary structure, the 4 large subunits of the cytochrome b6-f complex are cytochrome b6, subunit IV (17 kDa polypeptide, petD), cytochrome f and the Rieske protein, while the 4 small subunits are petG, petL, petM and petN. The complex functions as a dimer.

Its subcellular location is the plastid. The protein resides in the chloroplast thylakoid membrane. Component of the cytochrome b6-f complex, which mediates electron transfer between photosystem II (PSII) and photosystem I (PSI), cyclic electron flow around PSI, and state transitions. This Phalaenopsis aphrodite subsp. formosana (Moth orchid) protein is Cytochrome b6-f complex subunit 4.